Reading from the N-terminus, the 449-residue chain is UDP-N-acetylmuramoylalanine--D-glutamate ligase (449 aa).

ATP is bound at residue 119 to 125 (GSNGKTT).

It belongs to the MurCDEF family.

The protein localises to the cytoplasm. The catalysed reaction is UDP-N-acetyl-alpha-D-muramoyl-L-alanine + D-glutamate + ATP = UDP-N-acetyl-alpha-D-muramoyl-L-alanyl-D-glutamate + ADP + phosphate + H(+). It participates in cell wall biogenesis; peptidoglycan biosynthesis. In terms of biological role, cell wall formation. Catalyzes the addition of glutamate to the nucleotide precursor UDP-N-acetylmuramoyl-L-alanine (UMA). The polypeptide is UDP-N-acetylmuramoylalanine--D-glutamate ligase (Streptococcus suis (strain 98HAH33)).